The chain runs to 697 residues: Putative cryptochrome DASH (697 aa).

The 160-residue stretch at 5-164 folds into the Photolyase/cryptochrome alpha/beta domain; sequence KLLVYLLRRD…GFKLWHDEKY (160 aa). 2 disordered regions span residues 170-215 and 554-697; these read DNGL…FPSW and FSVT…PPHI. Residues 188–198 show a composition bias toward basic and acidic residues; that stretch reads KTQEPLRERPR. Residues 560 to 569 show a composition bias toward basic residues; the sequence is RGNRRPYRWR. Gly residues predominate over residues 578–590; sequence GRGGRGGGTGNTS. Composition is skewed to low complexity over residues 659 to 675 and 683 to 697; these read QQQQ…YAHQ and RQQQ…PPHI.

This sequence belongs to the DNA photolyase class-1 family. FAD is required as a cofactor. Requires (6R)-5,10-methylene-5,6,7,8-tetrahydrofolate as cofactor.

Functionally, may have a photoreceptor function. The chain is Putative cryptochrome DASH from Gibberella zeae (strain ATCC MYA-4620 / CBS 123657 / FGSC 9075 / NRRL 31084 / PH-1) (Wheat head blight fungus).